We begin with the raw amino-acid sequence, 111 residues long: Universal stress protein B (111 aa).

Helical transmembrane passes span 1-21 (MIST…NMAR) and 90-110 (FLLT…MMMW).

The protein belongs to the universal stress protein B family.

The protein resides in the cell inner membrane. The sequence is that of Universal stress protein B from Pectobacterium atrosepticum (strain SCRI 1043 / ATCC BAA-672) (Erwinia carotovora subsp. atroseptica).